The chain runs to 735 residues: Zinc finger CCCH domain-containing protein 14 (735 aa).

Met-1 bears the N-acetylmethionine mark. Residues 78 to 153 (TEPSSLKSPD…RHSYDDGAST (76 aa)) form a disordered region. Ser-85 bears the Phosphoserine mark. Glycyl lysine isopeptide (Lys-Gly) (interchain with G-Cter in SUMO2) cross-links involve residues Lys-99, Lys-139, Lys-175, and Lys-198. The span at 131–144 (VSTSSQEQKSTNVR) shows a compositional bias: polar residues. The residue at position 240 (Ser-240) is a Phosphoserine. Glycyl lysine isopeptide (Lys-Gly) (interchain with G-Cter in SUMO2) cross-links involve residues Lys-245, Lys-283, and Lys-295. The segment at 308–351 (FSHDGEEEEEDEDYGTRIGSLSSSVSVPAKPERRPSLPPSKQAN) is disordered. 3 positions are modified to phosphoserine: Ser-309, Ser-327, and Ser-343. Lys-357 bears the N6-acetyllysine; alternate mark. A Glycyl lysine isopeptide (Lys-Gly) (interchain with G-Cter in SUMO2); alternate cross-link involves residue Lys-357. A Glycyl lysine isopeptide (Lys-Gly) (interchain with G-Cter in SUMO2) cross-link involves residue Lys-378. 2 positions are modified to phosphoserine: Ser-390 and Ser-409. Residues 399 to 431 (VQGQNRAPRISPPVKEEEAKGDNTGKSQGTQQR) form a disordered region. A compositionally biased stretch (basic and acidic residues) spans 412–421 (VKEEEAKGDN). Residue Lys-413 forms a Glycyl lysine isopeptide (Lys-Gly) (interchain with G-Cter in SUMO2) linkage. Over residues 422-431 (TGKSQGTQQR) the composition is skewed to polar residues. Lys-489 participates in a covalent cross-link: Glycyl lysine isopeptide (Lys-Gly) (interchain with G-Cter in SUMO2). Phosphoserine occurs at positions 498, 515, 527, and 620. 5 consecutive C3H1-type zinc fingers follow at residues 595–620 (EKLL…HPIS), 621–640 (PCKA…VHPN), 641–656 (CKYD…PFTH), 681–698 (CRYF…YHPK), and 700–718 (CRFN…HPTI).

Belongs to the ZC3H14 family. Homodimer; facilitating circular RNAs (circRNAs) formation. Associates with the spliceosome. Interacts with HOOK2. Interacts with ZFC3H1 in a RNase-sensitive manner. In terms of tissue distribution, expressed in hippocampal pyramidal neurons (at protein level). Expressed in kidney, liver, muscle, heart brain and testes. Expressed in hippocampal pyramidal neurons.

It localises to the nucleus speckle. RNA-binding protein involved in the biogenesis of circular RNAs (circRNAs), which are produced by back-splicing circularization of pre-mRNAs. Acts by binding to both exon-intron boundary and 3'-UTR of pre-mRNAs to promote circRNA biogenesis through dimerization and the association with the spliceosome. Required for spermatogenesis via involvement in circRNA biogenesis. Regulates the pre-mRNA processing of ATP5MC1; preventing its degradation. Also binds the poly(A) tail of mRNAs; controlling poly(A) length in neuronal cells. This is Zinc finger CCCH domain-containing protein 14 from Mus musculus (Mouse).